The chain runs to 330 residues: Inactive hydroxysteroid dehydrogenase-like protein 1 (330 aa).

A2 is subject to N-acetylalanine. Residues A2–A82 are required for mitochondria translocation. Residues G74–G80, D125, and K222 each bind NADP(+).

Belongs to the short-chain dehydrogenases/reductases (SDR) family. 17-beta-HSD 3 subfamily. As to quaternary structure, interacts with STYXL1.

It localises to the mitochondrion. The protein is Inactive hydroxysteroid dehydrogenase-like protein 1 (Hsdl1) of Mus musculus (Mouse).